The sequence spans 181 residues: Adenine phosphoribosyltransferase (181 aa).

The protein belongs to the purine/pyrimidine phosphoribosyltransferase family. In terms of assembly, homodimer.

The protein localises to the cytoplasm. The catalysed reaction is AMP + diphosphate = 5-phospho-alpha-D-ribose 1-diphosphate + adenine. It functions in the pathway purine metabolism; AMP biosynthesis via salvage pathway; AMP from adenine: step 1/1. Functionally, catalyzes a salvage reaction resulting in the formation of AMP, that is energically less costly than de novo synthesis. This is Adenine phosphoribosyltransferase from Rhizobium leguminosarum bv. trifolii (strain WSM2304).